The sequence spans 60 residues: Large ribosomal subunit protein uL30 (60 aa).

It belongs to the universal ribosomal protein uL30 family. Part of the 50S ribosomal subunit.

In Paracidovorax citrulli (strain AAC00-1) (Acidovorax citrulli), this protein is Large ribosomal subunit protein uL30.